The chain runs to 70 residues: Large ribosomal subunit protein bL31 (70 aa).

Zn(2+)-binding residues include Cys-16, Cys-18, Cys-37, and Cys-40.

This sequence belongs to the bacterial ribosomal protein bL31 family. Type A subfamily. As to quaternary structure, part of the 50S ribosomal subunit. Zn(2+) serves as cofactor.

Binds the 23S rRNA. This is Large ribosomal subunit protein bL31 from Shewanella sediminis (strain HAW-EB3).